We begin with the raw amino-acid sequence, 388 residues long: Interferon alpha/beta receptor 1b (388 aa).

2 Fibronectin type-III domains span residues 5–102 (LPQP…FCPD) and 109–211 (PPSR…TEGD). Residues 217–237 (IFLYFLVSMMVCFLLVLLSSY) form a helical membrane-spanning segment. The segment at 308–357 (TAPPSELEQDSGRHIRQDSGDSGIYSTEGGSAQQGRSGGEPIRRDQEVDS) is disordered. The span at 317-326 (DSGRHIRQDS) shows a compositional bias: basic and acidic residues. Residues 331–342 (IYSTEGGSAQQG) are compositionally biased toward polar residues.

This sequence belongs to the type II cytokine receptor family. In terms of assembly, heterodimer with IFNAR2; forming the receptor for type I interferon.

It is found in the cell membrane. Its subcellular location is the cytoplasm. The protein localises to the perinuclear region. In terms of biological role, together with IFNAR2, forms the heterodimeric receptor for type I interferons (including interferons alpha, beta, epsilon, omega and kappa). Type I interferon binding activates the JAK-STAT signaling cascade, resulting in transcriptional activation or repression of interferon-regulated genes that encode the effectors of the interferon response. Mechanistically, type I interferon-binding brings the IFNAR1 and IFNAR2 subunits into close proximity with one another, driving their associated Janus kinases (JAKs) (TYK2 bound to IFNAR1 and JAK1 bound to IFNAR2) to cross-phosphorylate one another. The activated kinases phosphorylate specific tyrosine residues on the intracellular domains of IFNAR1 and IFNAR2, forming docking sites for the STAT transcription factors. STAT proteins are then phosphorylated by the JAKs, promoting their translocation into the nucleus to regulate expression of interferon-regulated genes. The chain is Interferon alpha/beta receptor 1b from Oncorhynchus mykiss (Rainbow trout).